We begin with the raw amino-acid sequence, 304 residues long: Release factor glutamine methyltransferase (304 aa).

Residues aspartate 144 and asparagine 188 each coordinate S-adenosyl-L-methionine. Residue 188–191 (NPPY) participates in substrate binding.

Belongs to the protein N5-glutamine methyltransferase family. PrmC subfamily.

The catalysed reaction is L-glutaminyl-[peptide chain release factor] + S-adenosyl-L-methionine = N(5)-methyl-L-glutaminyl-[peptide chain release factor] + S-adenosyl-L-homocysteine + H(+). In terms of biological role, methylates the class 1 translation termination release factors RF1/PrfA and RF2/PrfB on the glutamine residue of the universally conserved GGQ motif. This Mycobacterium tuberculosis (strain CDC 1551 / Oshkosh) protein is Release factor glutamine methyltransferase.